The primary structure comprises 65 residues: Disintegrin CC5 (65 aa).

The Disintegrin domain occupies 1–65 (MNSAHPCCDP…SDCPRNRYKS (65 aa)). Cystine bridges form between Cys-7–Cys-30, Cys-21–Cys-27, Cys-26–Cys-51, and Cys-39–Cys-58. Positions 43–45 (RGD) match the Cell attachment site motif.

Belongs to the disintegrin family. Dimeric disintegrin subfamily. As to quaternary structure, homodimer; disulfide-linked. As to expression, expressed by the venom gland.

The protein localises to the secreted. In terms of biological role, binds and inhibits integrins alpha-IIb/beta-3 (ITGA2B/ITGB3), alpha-V/beta-3 (ITGAV/ITGB3) and alpha-5/beta-1 (ITGA5/ITGB1). The chain is Disintegrin CC5 from Cerastes cerastes (Horned desert viper).